The primary structure comprises 195 residues: Orotate phosphoribosyltransferase (195 aa).

5-phospho-alpha-D-ribose 1-diphosphate contacts are provided by residues Arg-87, Lys-91, and 112-120 (DDVATTGGS). Residues Thr-116 and Arg-144 each coordinate orotate.

This sequence belongs to the purine/pyrimidine phosphoribosyltransferase family. PyrE subfamily. Homodimer. Mg(2+) serves as cofactor.

It carries out the reaction orotidine 5'-phosphate + diphosphate = orotate + 5-phospho-alpha-D-ribose 1-diphosphate. It functions in the pathway pyrimidine metabolism; UMP biosynthesis via de novo pathway; UMP from orotate: step 1/2. In terms of biological role, catalyzes the transfer of a ribosyl phosphate group from 5-phosphoribose 1-diphosphate to orotate, leading to the formation of orotidine monophosphate (OMP). The protein is Orotate phosphoribosyltransferase of Sulfurisphaera tokodaii (strain DSM 16993 / JCM 10545 / NBRC 100140 / 7) (Sulfolobus tokodaii).